The sequence spans 284 residues: uncharacterized protein (284 aa).

The chain crosses the membrane as a helical span at residues 12–32; that stretch reads ILFILFVVAFCVYLVPRVAIN.

This sequence belongs to the serine esterase family.

It localises to the membrane. This is an uncharacterized protein from Escherichia coli (strain K12).